Consider the following 125-residue polypeptide: Ribonuclease P protein component (125 aa).

Belongs to the RnpA family. As to quaternary structure, consists of a catalytic RNA component (M1 or rnpB) and a protein subunit.

It carries out the reaction Endonucleolytic cleavage of RNA, removing 5'-extranucleotides from tRNA precursor.. Functionally, RNaseP catalyzes the removal of the 5'-leader sequence from pre-tRNA to produce the mature 5'-terminus. It can also cleave other RNA substrates such as 4.5S RNA. The protein component plays an auxiliary but essential role in vivo by binding to the 5'-leader sequence and broadening the substrate specificity of the ribozyme. The chain is Ribonuclease P protein component from Idiomarina loihiensis (strain ATCC BAA-735 / DSM 15497 / L2-TR).